A 503-amino-acid polypeptide reads, in one-letter code: MATLTYEEALEILRQQIKDFEPEAKMEEVGVVYYVGDGVARAYGLENVMAMEIVEFQGGQQGIAFNLEEDNVGIIILGSETGIEEGHIVKRTGRILDAPVGEGLVGRVIDPLGNPLDGKGPIQFEYRSPVEKIAPGVVKRKPVHEPLQTGIKAIDAMIPIGRGQRELIIGDRATGKTTVAIDTILAQKNSDVYCIYVAVGQKRAAIARLIELLEREGAMEYTTVVVASASDPASLQYLAPFVGCTIGEYFRDNGKHALIIYDDLSKHAEAYRQLSLLMRRPPGREAYPGDVFYLHSRLLERAAKLNDDLGAGSLTALPIIETKAGDVAAYIPTNVISITDGQIYLEADLFNKGIRPAINVGLSVSRVGGAAQIKAMKQVAGTLRLELAQFRELEAFVQFASELDKATQQQINRGLRLVELLKQEPYNPIPVEKQIVLIYAGTHGYLDDIPVESVRKFEKELYAYLDNERPDILKEISEKKKLDEELEKKIKEALDAFKQKFVP.

Glycine 170 to threonine 177 contributes to the ATP binding site.

This sequence belongs to the ATPase alpha/beta chains family. F-type ATPases have 2 components, CF(1) - the catalytic core - and CF(0) - the membrane proton channel. CF(1) has five subunits: alpha(3), beta(3), gamma(1), delta(1), epsilon(1). CF(0) has three main subunits: a(1), b(2) and c(9-12). The alpha and beta chains form an alternating ring which encloses part of the gamma chain. CF(1) is attached to CF(0) by a central stalk formed by the gamma and epsilon chains, while a peripheral stalk is formed by the delta and b chains.

The protein resides in the cell inner membrane. It carries out the reaction ATP + H2O + 4 H(+)(in) = ADP + phosphate + 5 H(+)(out). Produces ATP from ADP in the presence of a proton gradient across the membrane. The alpha chain is a regulatory subunit. This is ATP synthase subunit alpha from Aquifex aeolicus (strain VF5).